The primary structure comprises 357 residues: CD4+ T-cell-stimulating antigen (357 aa).

A signal peptide spans 1-22 (MKKRTFALALSMIIASGVILGA). Cys23 carries N-palmitoyl cysteine lipidation. Cys23 is lipidated: S-diacylglycerol cysteine.

The protein belongs to the BMP lipoprotein family.

It is found in the cell membrane. The sequence is that of CD4+ T-cell-stimulating antigen (tcsA) from Listeria monocytogenes serovar 1/2a (strain ATCC BAA-679 / EGD-e).